Reading from the N-terminus, the 328-residue chain is Beta-ketoacyl-[acyl-carrier-protein] synthase III (328 aa).

Active-site residues include C122 and H255. Residues 256 to 260 (QANVR) are ACP-binding. N285 is a catalytic residue.

This sequence belongs to the thiolase-like superfamily. FabH family. Homodimer.

Its subcellular location is the cytoplasm. The catalysed reaction is malonyl-[ACP] + acetyl-CoA + H(+) = 3-oxobutanoyl-[ACP] + CO2 + CoA. It functions in the pathway lipid metabolism; fatty acid biosynthesis. In terms of biological role, catalyzes the condensation reaction of fatty acid synthesis by the addition to an acyl acceptor of two carbons from malonyl-ACP. Catalyzes the first condensation reaction which initiates fatty acid synthesis and may therefore play a role in governing the total rate of fatty acid production. Possesses both acetoacetyl-ACP synthase and acetyl transacylase activities. Its substrate specificity determines the biosynthesis of branched-chain and/or straight-chain of fatty acids. This Bordetella petrii (strain ATCC BAA-461 / DSM 12804 / CCUG 43448) protein is Beta-ketoacyl-[acyl-carrier-protein] synthase III.